Consider the following 811-residue polypeptide: Glycerol-3-phosphate acyltransferase (811 aa).

Positions 305-310 (CHRSHI) match the HXXXXD motif motif.

The protein belongs to the GPAT/DAPAT family.

It localises to the cell inner membrane. The enzyme catalyses sn-glycerol 3-phosphate + an acyl-CoA = a 1-acyl-sn-glycero-3-phosphate + CoA. Its pathway is phospholipid metabolism; CDP-diacylglycerol biosynthesis; CDP-diacylglycerol from sn-glycerol 3-phosphate: step 1/3. The chain is Glycerol-3-phosphate acyltransferase from Histophilus somni (strain 129Pt) (Haemophilus somnus).